Here is a 309-residue protein sequence, read N- to C-terminus: D-allose kinase (309 aa).

Residues 10–17 and 142–149 each bind ATP; these read GVDMGATH and GMGFAVWM.

This sequence belongs to the ROK (NagC/XylR) family.

It catalyses the reaction D-allose + ATP = D-allose 6-phosphate + ADP + H(+). The protein operates within carbohydrate degradation; D-allose degradation. Its function is as follows. Catalyzes the phosphorylation of D-allose to D-allose 6-phosphate. Also has low level glucokinase activity in vitro. The sequence is that of D-allose kinase from Escherichia coli (strain K12).